The chain runs to 65 residues: Large ribosomal subunit protein bL35 (65 aa).

The protein belongs to the bacterial ribosomal protein bL35 family.

This chain is Large ribosomal subunit protein bL35, found in Borrelia duttonii (strain Ly).